A 316-amino-acid polypeptide reads, in one-letter code: Ribose-phosphate pyrophosphokinase (316 aa).

Residues 40-42 (DGE) and 99-100 (RQ) each bind ATP. Residues histidine 133 and aspartate 174 each coordinate Mg(2+). The active site involves lysine 197. Residues arginine 199, aspartate 223, and 227–231 (DTAGT) each bind D-ribose 5-phosphate.

It belongs to the ribose-phosphate pyrophosphokinase family. Class I subfamily. Homohexamer. The cofactor is Mg(2+).

The protein resides in the cytoplasm. It catalyses the reaction D-ribose 5-phosphate + ATP = 5-phospho-alpha-D-ribose 1-diphosphate + AMP + H(+). Its pathway is metabolic intermediate biosynthesis; 5-phospho-alpha-D-ribose 1-diphosphate biosynthesis; 5-phospho-alpha-D-ribose 1-diphosphate from D-ribose 5-phosphate (route I): step 1/1. In terms of biological role, involved in the biosynthesis of the central metabolite phospho-alpha-D-ribosyl-1-pyrophosphate (PRPP) via the transfer of pyrophosphoryl group from ATP to 1-hydroxyl of ribose-5-phosphate (Rib-5-P). The protein is Ribose-phosphate pyrophosphokinase of Fusobacterium nucleatum subsp. nucleatum (strain ATCC 25586 / DSM 15643 / BCRC 10681 / CIP 101130 / JCM 8532 / KCTC 2640 / LMG 13131 / VPI 4355).